We begin with the raw amino-acid sequence, 165 residues long: MEPCRSLALFAGSLGLTSSLIALTTDFWIVATGPHFSAHSGLWPTSQETQVAGYIHVTQSFCILAVLWGLVSVSFLILSCIPALSAPGRGPLVSTVMAFSAALSILVAMAVYTSMRWSQTPFSQVQTFFSWSFYLGWVSFILFLFAGCLSLGAHCRTRRAEYETL.

A run of 4 helical transmembrane segments spans residues 9-29 (LFAGSLGLTSSLIALTTDFWI), 61-81 (FCILAVLWGLVSVSFLILSCI), 92-112 (LVSTVMAFSAALSILVAMAVY), and 133-153 (FYLGWVSFILFLFAGCLSLGA).

It belongs to the PMP-22/EMP/MP20 family. Predominantly expressed by leukocytes with cytotoxic activity such as CD8(+) T-cells and natural killer cells.

The protein localises to the cell membrane. Its subcellular location is the cytolytic granule membrane. Its function is as follows. Regulates cytotoxic granule exocytosis in effector lymphocytes, thus acting as a critical mediator of inflammation in a broad range of infectious and non-infectious diseases. Essential for cytotoxic degranulation of natural killer (NK) cells and CD8(+) T-cells and for the activation of CD4(+) T-cells following infection. Plays a critical role in CD8(+) T-cell and NK cell-mediated cytolysis of target cells and contributes to the cytolytic activity via the perforin/granzyme pathway by enhancing exocytosis of LAMP1-carrying lytic granules. Contributes to NK cell-mediated control of cancer metastasis. The protein is Protein NKG7 (Nkg7) of Mus musculus (Mouse).